The primary structure comprises 197 residues: Cytochrome c biogenesis ATP-binding export protein CcmA (197 aa).

Positions 1–196 (MSMLSLHQLQ…VIKSAQILQL (196 aa)) constitute an ABC transporter domain. Position 35 to 42 (35 to 42 (GANGSGKS)) interacts with ATP.

This sequence belongs to the ABC transporter superfamily. CcmA exporter (TC 3.A.1.107) family. In terms of assembly, the complex is composed of two ATP-binding proteins (CcmA) and two transmembrane proteins (CcmB).

It is found in the cell inner membrane. The enzyme catalyses heme b(in) + ATP + H2O = heme b(out) + ADP + phosphate + H(+). Part of the ABC transporter complex CcmAB involved in the biogenesis of c-type cytochromes; once thought to export heme, this seems not to be the case, but its exact role is uncertain. Responsible for energy coupling to the transport system. This Rickettsia typhi (strain ATCC VR-144 / Wilmington) protein is Cytochrome c biogenesis ATP-binding export protein CcmA.